The following is a 251-amino-acid chain: Ditrans,polycis-undecaprenyl-diphosphate synthase ((2E,6E)-farnesyl-diphosphate specific) (251 aa).

Residue Asp-21 is part of the active site. Mg(2+) is bound at residue Asp-21. Residues Gly-22–Arg-25, Trp-26, His-38, and Ser-66–Glu-68 contribute to the substrate site. Catalysis depends on Asn-69, which acts as the Proton acceptor. Residues Trp-70, Arg-72, Arg-189, and Arg-195–Ser-197 each bind substrate. Glu-208 contacts Mg(2+).

It belongs to the UPP synthase family. Homodimer. It depends on Mg(2+) as a cofactor.

It catalyses the reaction 8 isopentenyl diphosphate + (2E,6E)-farnesyl diphosphate = di-trans,octa-cis-undecaprenyl diphosphate + 8 diphosphate. Catalyzes the sequential condensation of isopentenyl diphosphate (IPP) with (2E,6E)-farnesyl diphosphate (E,E-FPP) to yield (2Z,6Z,10Z,14Z,18Z,22Z,26Z,30Z,34E,38E)-undecaprenyl diphosphate (di-trans,octa-cis-UPP). UPP is the precursor of glycosyl carrier lipid in the biosynthesis of bacterial cell wall polysaccharide components such as peptidoglycan and lipopolysaccharide. The sequence is that of Ditrans,polycis-undecaprenyl-diphosphate synthase ((2E,6E)-farnesyl-diphosphate specific) from Pseudomonas syringae pv. tomato (strain ATCC BAA-871 / DC3000).